The primary structure comprises 508 residues: Photosystem II CP47 reaction center protein (508 aa).

The next 6 membrane-spanning stretches (helical) occupy residues 21–36 (AVHLMHTALVSGWAGS), 101–115 (IILSGLLFLAAIWHW), 140–156 (GIHLFLSGVLCFGFGAF), 203–218 (IAAGILGIIAGLFHLS), 237–252 (VLSSSIAAVFWAAFVV), and 457–472 (NFALLFFFGHIWHGSR).

This sequence belongs to the PsbB/PsbC family. PsbB subfamily. As to quaternary structure, PSII is composed of 1 copy each of membrane proteins PsbA, PsbB, PsbC, PsbD, PsbE, PsbF, PsbH, PsbI, PsbJ, PsbK, PsbL, PsbM, PsbT, PsbX, PsbY, PsbZ, Psb30/Ycf12, at least 3 peripheral proteins of the oxygen-evolving complex and a large number of cofactors. It forms dimeric complexes. The cofactor is Binds multiple chlorophylls. PSII binds additional chlorophylls, carotenoids and specific lipids..

It is found in the plastid. The protein resides in the chloroplast thylakoid membrane. In terms of biological role, one of the components of the core complex of photosystem II (PSII). It binds chlorophyll and helps catalyze the primary light-induced photochemical processes of PSII. PSII is a light-driven water:plastoquinone oxidoreductase, using light energy to abstract electrons from H(2)O, generating O(2) and a proton gradient subsequently used for ATP formation. The sequence is that of Photosystem II CP47 reaction center protein from Staurastrum punctulatum (Green alga).